The sequence spans 116 residues: Ribosome-binding factor A (116 aa).

The protein belongs to the RbfA family. In terms of assembly, monomer. Binds 30S ribosomal subunits, but not 50S ribosomal subunits or 70S ribosomes.

It is found in the cytoplasm. One of several proteins that assist in the late maturation steps of the functional core of the 30S ribosomal subunit. Associates with free 30S ribosomal subunits (but not with 30S subunits that are part of 70S ribosomes or polysomes). Required for efficient processing of 16S rRNA. May interact with the 5'-terminal helix region of 16S rRNA. This chain is Ribosome-binding factor A, found in Ureaplasma parvum serovar 3 (strain ATCC 27815 / 27 / NCTC 11736).